The primary structure comprises 222 residues: Adapter protein MecA (222 aa).

It belongs to the MecA family. As to quaternary structure, homodimer.

Functionally, enables the recognition and targeting of unfolded and aggregated proteins to the ClpC protease or to other proteins involved in proteolysis. The protein is Adapter protein MecA of Lysinibacillus sphaericus (strain C3-41).